A 394-amino-acid polypeptide reads, in one-letter code: Protein TsgA homolog (394 aa).

12 helical membrane-spanning segments follow: residues 11-31 (WISY…GMVM), 51-71 (FLNA…EIIP), 76-96 (LVFG…GHNL), 101-121 (ISMF…TFLI), 134-154 (LLFT…AAAI), 162-182 (WYWV…LTLC), 206-226 (MGVL…LGFI), 246-266 (QLVS…SFIL), 274-294 (IVTV…STNN), 302-322 (ILAL…LGSL), 334-354 (FILT…GPIV), and 363-383 (LATA…LGFF).

Belongs to the major facilitator superfamily. TsgA family.

The protein resides in the cell inner membrane. In Yersinia enterocolitica serotype O:8 / biotype 1B (strain NCTC 13174 / 8081), this protein is Protein TsgA homolog.